We begin with the raw amino-acid sequence, 404 residues long: Latent membrane protein 1 (404 aa).

The Cytoplasmic portion of the chain corresponds to 1–23 (MERDLESAPPSAPRPPLGPPLSS). The helical transmembrane segment at 24 to 44 (SIGLALLLLLLALLFWLYIVM) threads the bilayer. The Extracellular portion of the chain corresponds to 45 to 51 (SDWTGGA). The chain crosses the membrane as a helical span at residues 52–72 (LLVLYSFALMLIIIILIIFIF). Residues 73–75 (RRD) are Cytoplasmic-facing. Residues 76–96 (LLCPLGGLGLLLLMITLLLIA) form a helical membrane-spanning segment. Topologically, residues 97-106 (LWNLHGQALY) are extracellular. The helical transmembrane segment at 107–127 (LGIVLFIFGCLLVFGIWIYFL) threads the bilayer. The Cytoplasmic segment spans residues 128–139 (EILWRLGATLWQ). A helical membrane pass occupies residues 140 to 160 (LLAFILAFFLAIILLIIALYL). At 161–163 (QQN) the chain is on the extracellular side. The chain crosses the membrane as a helical span at residues 164-184 (WWTLLVDLLWLLLFMAILIWM). Topologically, residues 185–404 (YYHGPRHTDE…HGPVQLSYYD (220 aa)) are cytoplasmic. The CTAR1 stretch occupies residues 194 to 232 (EHHHDDSLPHPQQATDDSSHESDSNSNEGRHHLLVSGAG). The interval 194-404 (EHHHDDSLPH…HGPVQLSYYD (211 aa)) is disordered. The short motif at 204–208 (PQQAT) is the Interaction with host TRAF proteins element. The span at 210–224 (DSSHESDSNSNEGRH) shows a compositional bias: basic and acidic residues. 2 stretches are compositionally biased toward low complexity: residues 251–322 (NGPQ…PQDP) and 375–384 (PHLPTLLLGT). Residues 370–404 (GGGGDPHLPTLLLGTSGSGGDDDDPHGPVQLSYYD) are CTAR2.

The protein belongs to the herpesviridae LMP-1 family. Interacts (via PXQXT motif) with host tumor necrosis factor receptor-associated factor (TRAF) proteins TRAF1, TRAF2, TRAF3 and TRAF5. Interacts with human protein ZMYND11; leading to negatively regulate NF-kappa-B activation. Interacts with host UBE2I; this interaction induces the sumoylation of various cellular proteins. Interacts with host IRF7. Interacts with host TYK2. Ubiquitinated on the N-terminus.

The protein resides in the host cell membrane. In terms of biological role, acts as a CD40 functional homolog to prevent apoptosis of infected B-lymphocytes and drive their proliferation. Functions as a constitutively active tumor necrosis factor receptor that induces the activation of several signaling pathways, including those of the NF-kappa-B family. LMP1 signaling leads to up-regulation of antiapoptotic proteins and provide growth signals in latently infected cells. Interacts with host UBE2I and subsequently affects the sumoylation state of several cellular proteins. For example, induces the sumoylation of host IRF7 thereby limiting its transcriptional activity and modulating the activation of innate immune responses. Also inhibits host IFN-alpha-stimulated STAT2 nuclear translocation and interferon-stimulated response element transcriptional activity by interacting with and inhibiting host TYK2. Induces SUMO expression during viral latency thereby dysregulating the host sumoylation processes. In Homo sapiens (Human), this protein is Latent membrane protein 1 (LMP1).